Here is a 675-residue protein sequence, read N- to C-terminus: Rho guanine nucleotide exchange factor 37 (675 aa).

The tract at residues 1–26 (MAKHGADEPSSRSGSPDREGRASEDR) is disordered. The DH domain maps to 30-213 (HQRLAVRELI…QDVNTNINEY (184 aa)). The region spanning 254–455 (LKQEAGLIPR…LPHHHVPEPA (202 aa)) is the BAR domain. 2 consecutive SH3 domains span residues 506–569 (GPGK…LYHV) and 602–665 (PTMN…RARS).

Its function is as follows. May act as a guanine nucleotide exchange factor (GEF). This is Rho guanine nucleotide exchange factor 37 (ARHGEF37) from Homo sapiens (Human).